Consider the following 208-residue polypeptide: Small ribosomal subunit protein uS3 (208 aa).

The 70-residue stretch at 16–85 (VDEYLKNKLP…KPQIEVKQIE (70 aa)) folds into the KH type-2 domain.

Belongs to the universal ribosomal protein uS3 family. In terms of assembly, part of the 30S ribosomal subunit.

Functionally, binds the lower part of the 30S subunit head. The protein is Small ribosomal subunit protein uS3 of Methanococcus aeolicus (strain ATCC BAA-1280 / DSM 17508 / OCM 812 / Nankai-3).